The following is a 214-amino-acid chain: Putative 3-methyladenine DNA glycosylase (214 aa).

Belongs to the DNA glycosylase MPG family.

The polypeptide is Putative 3-methyladenine DNA glycosylase (Gloeobacter violaceus (strain ATCC 29082 / PCC 7421)).